A 406-amino-acid polypeptide reads, in one-letter code: Succinylornithine transaminase (406 aa).

At lysine 252 the chain carries N6-(pyridoxal phosphate)lysine.

Belongs to the class-III pyridoxal-phosphate-dependent aminotransferase family. AstC subfamily. It depends on pyridoxal 5'-phosphate as a cofactor.

It carries out the reaction N(2)-succinyl-L-ornithine + 2-oxoglutarate = N-succinyl-L-glutamate 5-semialdehyde + L-glutamate. Its pathway is amino-acid degradation; L-arginine degradation via AST pathway; L-glutamate and succinate from L-arginine: step 3/5. Catalyzes the transamination of N(2)-succinylornithine and alpha-ketoglutarate into N(2)-succinylglutamate semialdehyde and glutamate. Can also act as an acetylornithine aminotransferase. This is Succinylornithine transaminase from Escherichia coli O127:H6 (strain E2348/69 / EPEC).